The sequence spans 59 residues: MAVPKKRTSMSKKRIRKNLWKKKTYFSIVQSYSLAKSRSFSRGNEHPKPKGFSGQQANK.

A disordered region spans residues 37–59 (SRSFSRGNEHPKPKGFSGQQANK).

Belongs to the bacterial ribosomal protein bL32 family.

The protein localises to the plastid. It is found in the chloroplast. The polypeptide is Large ribosomal subunit protein bL32c (rpl32) (Zea mays (Maize)).